The primary structure comprises 226 residues: Endonuclease V (226 aa).

Mg(2+)-binding residues include D43 and D109.

The protein belongs to the endonuclease V family. Requires Mg(2+) as cofactor.

Its subcellular location is the cytoplasm. The catalysed reaction is Endonucleolytic cleavage at apurinic or apyrimidinic sites to products with a 5'-phosphate.. DNA repair enzyme involved in the repair of deaminated bases. Selectively cleaves double-stranded DNA at the second phosphodiester bond 3' to a deoxyinosine leaving behind the intact lesion on the nicked DNA. This is Endonuclease V from Kosmotoga olearia (strain ATCC BAA-1733 / DSM 21960 / TBF 19.5.1).